The sequence spans 236 residues: GTP cyclohydrolase 1 (236 aa).

The tract at residues 1-52 (MAAARSCNGYARREGPPSPKLGTEKPRVSAGSGGSGDGWRGERPRSEEDNEL) is disordered. 3 residues coordinate Zn(2+): C127, H130, and C198.

It belongs to the GTP cyclohydrolase I family. In terms of assembly, toroid-shaped homodecamer, composed of two pentamers of five dimers.

Its subcellular location is the cytoplasm. It is found in the nucleus. It carries out the reaction GTP + H2O = 7,8-dihydroneopterin 3'-triphosphate + formate + H(+). Its pathway is cofactor biosynthesis; 7,8-dihydroneopterin triphosphate biosynthesis; 7,8-dihydroneopterin triphosphate from GTP: step 1/1. GTP shows a positive allosteric effect, and tetrahydrobiopterin inhibits the enzyme activity. Zinc is required for catalytic activity. Inhibited by Mg(2+). Functionally, may positively regulate nitric oxide synthesis in endothelial cells. May be involved in dopamine synthesis. May modify pain sensitivity and persistence. The protein is GTP cyclohydrolase 1 (GCH1) of Gallus gallus (Chicken).